A 245-amino-acid chain; its full sequence is tRNA (guanine-N(1)-)-methyltransferase (245 aa).

Residues G111 and 130-135 (IGDYVL) contribute to the S-adenosyl-L-methionine site.

Belongs to the RNA methyltransferase TrmD family. In terms of assembly, homodimer.

The protein localises to the cytoplasm. The enzyme catalyses guanosine(37) in tRNA + S-adenosyl-L-methionine = N(1)-methylguanosine(37) in tRNA + S-adenosyl-L-homocysteine + H(+). Its function is as follows. Specifically methylates guanosine-37 in various tRNAs. This is tRNA (guanine-N(1)-)-methyltransferase from Dictyoglomus turgidum (strain DSM 6724 / Z-1310).